A 338-amino-acid polypeptide reads, in one-letter code: MNRIDVHHHFIPPAYVKAFNSTPGDPSGWHLPKWTPESTLSLMASHSTRTAILSLTAPGTSIMSNSPVESANLARQINLYGFQLHQENPTRFGFFASLPHLTPETIPSAVEELAYALDTLQADGITLYTRYSGTGYLGHAAFAPLWEELNRRKAVVFIHPTNTASDAQNKPEMVNPKLPQPIIDYPHETCRTAVDLITSGTISKNPDVKIILSHGGGTLPILATRAANLLYDAGLTEITPETFLEQARSFYLDLALSGNVGNLELLVGKNGFAKPGHVLYGSDFPYAPVETINKYVGMMEEFFAQGGDKEEVARGAAAELFPRFRIEDNKEMIPQNRL.

Residues H7, H9, H159, and D283 each coordinate Zn(2+).

The protein belongs to the metallo-dependent hydrolases superfamily. ACMSD family.

The catalysed reaction is 6-methylsalicylate + H(+) = 3-methylphenol + CO2. It functions in the pathway secondary metabolite biosynthesis; terpenoid biosynthesis. Its function is as follows. Decarboxylase; part of the gene cluster that mediates the biosynthesis of macrophorins, isoprenoid epoxycyclohexenones containing cyclized drimane moieties. The first step of the pathway is the synthesis of 6-methylsalicylic acid (6-MSA) by the polyketide synthase macA. 6-MSA is then converted to m-cresol by the decarboxylase macB. The cytochrome P450 monooxygenase macC then catalyzes the oxidation of m-cresol to toluquinol. Epoxidation of toluquinol is then performed by the short chain dehydrogenase macD, with the help of macE, and a further prenylation by macG leads to 7-deacetoxyyanuthone A. The next step is the hydroxylation of C-22 of 7-deacetoxyyanuthone A by the cytochrome P450 monooxygenase macH to yield 22-deacetylyanuthone A. O-Mevalon transferase macI then attaches mevalon to the hydroxyl group of 22-deacetylyanuthone A to produce yanuthone E. The terpene cyclase macJ catalyzes the cyclization of 22-deacetylyanuthone A to macrophorin A. MacJ is also able to catalyze cyclization of yanuthone E and 7-deacetoxyyanuthone A to their corresponding macrophorins. The macJ products can be further modified by macH and macJ, as well as by the FAD-dependent monooxygenase macF, to produce additional macrophorins, including 4'-oxomacrophorin A, 4'-oxomacrophorin D and 4'-oxomacrophorin E. This chain is Decarboxylase macB, found in Penicillium terrestre.